A 151-amino-acid chain; its full sequence is Small ribosomal subunit protein bS6 (151 aa).

Residues 96-151 (HEEGQSAMLTRRDDRRERDGDDRPRRREGGFDRGDRGDRGDRGPRRPRDNEAGEGA) are disordered.

The protein belongs to the bacterial ribosomal protein bS6 family.

Functionally, binds together with bS18 to 16S ribosomal RNA. This is Small ribosomal subunit protein bS6 from Brucella anthropi (strain ATCC 49188 / DSM 6882 / CCUG 24695 / JCM 21032 / LMG 3331 / NBRC 15819 / NCTC 12168 / Alc 37) (Ochrobactrum anthropi).